The primary structure comprises 344 residues: Ferredoxin--NADP reductase (344 aa).

Residues aspartate 36, glutamine 44, tyrosine 49, valine 89, phenylalanine 127, aspartate 291, and threonine 332 each coordinate FAD.

The protein belongs to the ferredoxin--NADP reductase type 2 family. In terms of assembly, homodimer. FAD serves as cofactor.

The enzyme catalyses 2 reduced [2Fe-2S]-[ferredoxin] + NADP(+) + H(+) = 2 oxidized [2Fe-2S]-[ferredoxin] + NADPH. The sequence is that of Ferredoxin--NADP reductase from Beijerinckia indica subsp. indica (strain ATCC 9039 / DSM 1715 / NCIMB 8712).